Consider the following 504-residue polypeptide: 2,3-bisphosphoglycerate-independent phosphoglycerate mutase (504 aa).

Mn(2+) contacts are provided by aspartate 11 and serine 61. Catalysis depends on serine 61, which acts as the Phosphoserine intermediate. Substrate is bound by residues histidine 122, 152–153, arginine 183, arginine 189, 255–258, and lysine 329; these read RD and RNDR. Residues aspartate 396, histidine 400, aspartate 437, histidine 438, and histidine 455 each contribute to the Mn(2+) site.

This sequence belongs to the BPG-independent phosphoglycerate mutase family. In terms of assembly, monomer. Mn(2+) is required as a cofactor.

It catalyses the reaction (2R)-2-phosphoglycerate = (2R)-3-phosphoglycerate. The protein operates within carbohydrate degradation; glycolysis; pyruvate from D-glyceraldehyde 3-phosphate: step 3/5. In terms of biological role, catalyzes the interconversion of 2-phosphoglycerate and 3-phosphoglycerate. The sequence is that of 2,3-bisphosphoglycerate-independent phosphoglycerate mutase from Bacteroides thetaiotaomicron (strain ATCC 29148 / DSM 2079 / JCM 5827 / CCUG 10774 / NCTC 10582 / VPI-5482 / E50).